The sequence spans 264 residues: MIKVAVAGPRGKMGREAVKMIHEADTLELVAVVDSKHDGMLVRQLDGLPPSDAPVYNELERCLTSQTIDVLVDLTTPAHGKRHMEIALDHGVRPVVGTTGFTDEDITNLRKKAEEKGIGAIIAPNFAIGAILMMKFAQTAAKYLPDVEIIEMHHDRKLDAPSGTALKTAQLISEVRKAKQQGHPDETEELKGARGADFEGMSIHSVRLPGLVAHQEVLFGGVGQTLKIRHDSMNRESFMPGVKLSIETVMGIDTLVYGLENIIE.

8 to 13 (GPRGKM) lines the NAD(+) pocket. Lys-36 contacts NADP(+). NAD(+) contacts are provided by residues 97-99 (GTT) and 123-126 (APNF). The active-site Proton donor/acceptor is His-153. His-154 is a binding site for (S)-2,3,4,5-tetrahydrodipicolinate. Lys-157 acts as the Proton donor in catalysis. A (S)-2,3,4,5-tetrahydrodipicolinate-binding site is contributed by 163–164 (GT).

This sequence belongs to the DapB family.

The protein resides in the cytoplasm. The catalysed reaction is (S)-2,3,4,5-tetrahydrodipicolinate + NAD(+) + H2O = (2S,4S)-4-hydroxy-2,3,4,5-tetrahydrodipicolinate + NADH + H(+). The enzyme catalyses (S)-2,3,4,5-tetrahydrodipicolinate + NADP(+) + H2O = (2S,4S)-4-hydroxy-2,3,4,5-tetrahydrodipicolinate + NADPH + H(+). It functions in the pathway amino-acid biosynthesis; L-lysine biosynthesis via DAP pathway; (S)-tetrahydrodipicolinate from L-aspartate: step 4/4. In terms of biological role, catalyzes the conversion of 4-hydroxy-tetrahydrodipicolinate (HTPA) to tetrahydrodipicolinate. The protein is 4-hydroxy-tetrahydrodipicolinate reductase of Halalkalibacterium halodurans (strain ATCC BAA-125 / DSM 18197 / FERM 7344 / JCM 9153 / C-125) (Bacillus halodurans).